A 2055-amino-acid chain; its full sequence is Multiple PDZ domain protein (2055 aa).

Residues 1–63 (MLETIDKNRA…SLQQLKDQVN (63 aa)) enclose the L27 domain. The 88-residue stretch at 138-225 (IFELLKPPCG…TVQLVIARGS (88 aa)) folds into the PDZ 1 domain. A Phosphoserine modification is found at serine 231. The PDZ 2 domain occupies 258–338 (TIELVNDGSG…RVKLMIARGA (81 aa)). Residues 348-360 (LGITLSSSTSSTS) are compositionally biased toward low complexity. The tract at residues 348-372 (LGITLSSSTSSTSEMRVDASTQKND) is disordered. 3 consecutive PDZ domains span residues 378–464 (DVEL…MRKG), 546–627 (VAHV…CRRT), and 693–779 (SIEL…VAKP). Phosphoserine is present on residues serine 783 and serine 1066. One can recognise a PDZ 6 domain in the interval 996 to 1077 (TVTIAKGSSS…IGPDIKITYV (82 aa)). A disordered region spans residues 1111-1130 (PELPEREEGEGEESELQNAA). A PDZ 7 domain is found at 1139-1231 (RVELWREPSK…PVVFMVQSII (93 aa)). The residue at position 1158 (arginine 1158) is an Omega-N-methylarginine. The segment covering 1264–1274 (LTTDQAPSQSE) has biased composition (polar residues). Residues 1264–1299 (LTTDQAPSQSESETEKPALCNVPPSSPSVFSEMGSD) are disordered. The PDZ 8 domain maps to 1338 to 1421 (VIELEKGQSG…KVKIIFIRNA (84 aa)). Low complexity predominate over residues 1435–1445 (ADSPSSTSDSP). Residues 1435-1459 (ADSPSSTSDSPQNKEVEPCSTTSAS) are disordered. One can recognise a PDZ 9 domain in the interval 1471-1552 (QLELPKDQGG…TVKLTVRAEN (82 aa)). The segment at 1557–1597 (AVPSSAVTVSGERKDNSQTPAVPAPDLEPIPSTSRSSTPAV) is disordered. 2 consecutive PDZ domains span residues 1614 to 1697 (TIEI…YRDE) and 1710 to 1792 (TIEL…GRVK). The interval 1795 to 1834 (PFHSERRPSQSSQVSESSLSSFTPPLSGINTSESLESNSK) is disordered. 2 positions are modified to phosphoserine: serine 1803 and serine 1809. Residues 1803–1815 (SQSSQVSESSLSS) are compositionally biased toward low complexity. The span at 1816–1834 (FTPPLSGINTSESLESNSK) shows a compositional bias: polar residues. PDZ domains follow at residues 1847–1933 (TVEI…VAGG) and 1972–2055 (TITL…MVLS).

In terms of assembly, interacts with CLDN5, DLG4, GRIN1, SYNGAP1, CAMK2A and CAMK2B, HTR2A, HTR2B, HTR2C, PLEKHA1/TAPP1 and PLEKHA2/TAPP2. Interacts with F11R/JAM, CLDN1, NG2, CXADR, CRB1, MPP4 and PALS1. Interacts with FAT4 (via cytoplasmic domain). Interacts with DLL1. In the brain, it is strongly expressed in the choroid plexus. Within the hippocampal formation, strongest expression was seen in the soma of CA1-4 pyramidal cells. Expressed in most neocortical regions with the strongest expression in piriform cortex and amygdaloid nuclei but also detected in the subiculum and olfactory bulb. In the cerebellum, the highest level of expression was found in Purkinje cells. Moderately expressed in the granular layer and molecular layer. Expressed in the pontine nuclei, parts of spinal trigeminal nuclei, and the principal sensory trigeminal nuclei of the metencephalon. Expressed in all thalamic and hypothalamic nuclei, and the substantia nigra (at protein level). Ubiquitously expressed.

Its subcellular location is the cell membrane. It is found in the apical cell membrane. The protein resides in the postsynaptic density. It localises to the cell projection. The protein localises to the dendrite. Its subcellular location is the cell junction. It is found in the tight junction. The protein resides in the synapse. It localises to the synaptosome. In terms of biological role, member of the NMDAR signaling complex that may play a role in control of AMPAR potentiation and synaptic plasticity in excitatory synapses. Promotes clustering of HT2RC at the cell surface. The polypeptide is Multiple PDZ domain protein (Mpdz) (Mus musculus (Mouse)).